The following is a 424-amino-acid chain: Arogenate dehydratase 1 (424 aa).

A chloroplast-targeting transit peptide spans 1–52 (MQSLTPSSGVNLKSIIRKTSLPPGQTRFITGRVIKCGYQVDSANTVNTAGAP). Residues 131–308 (RVAYQGVPGA…NVTRFVMLAR (178 aa)) enclose the Prephenate dehydratase domain. An ACT domain is found at 321–412 (TSIVFAHEGT…SFLRVLGSYP (92 aa)).

As to expression, mostly expressed in flowers, especially in petals (corollas and tubes), and, at low levels, in roots, stems, leaves, pistils, stamens, ovaries and sepals.

The protein resides in the plastid. It localises to the chloroplast stroma. It carries out the reaction L-arogenate + H(+) = L-phenylalanine + CO2 + H2O. The protein operates within amino-acid biosynthesis; L-phenylalanine biosynthesis; L-phenylalanine from L-arogenate: step 1/1. In terms of biological role, converts L-arogenate produced from the shikimate-chorismate pathway into phenylalanine (Phe). Involved in floral volatile benzenoids and phenylpropanoids (FVBP) production. The sequence is that of Arogenate dehydratase 1 from Petunia hybrida (Petunia).